The sequence spans 150 residues: 3-dehydroquinate dehydratase (150 aa).

The active-site Proton acceptor is Tyr26. Positions 77, 83, and 90 each coordinate substrate. His103 functions as the Proton donor in the catalytic mechanism. Substrate-binding positions include 104-105 (LS) and Arg114.

Belongs to the type-II 3-dehydroquinase family. As to quaternary structure, homododecamer.

It carries out the reaction 3-dehydroquinate = 3-dehydroshikimate + H2O. Its pathway is metabolic intermediate biosynthesis; chorismate biosynthesis; chorismate from D-erythrose 4-phosphate and phosphoenolpyruvate: step 3/7. Functionally, catalyzes a trans-dehydration via an enolate intermediate. The protein is 3-dehydroquinate dehydratase of Enterobacter sp. (strain 638).